Here is a 500-residue protein sequence, read N- to C-terminus: uncharacterized protein (500 aa).

A helical membrane pass occupies residues Ile27 to Phe47.

Its subcellular location is the membrane. This is an uncharacterized protein from Borreliella burgdorferi (strain ATCC 35210 / DSM 4680 / CIP 102532 / B31) (Borrelia burgdorferi).